The following is a 348-amino-acid chain: Anthranilate phosphoribosyltransferase (348 aa).

5-phospho-alpha-D-ribose 1-diphosphate-binding positions include glycine 81, 84 to 85, 91 to 94, 109 to 117, and serine 121; these read GD, NVST, and KHGNRAVSG. An anthranilate-binding site is contributed by glycine 81. Mg(2+) is bound at residue serine 93. Position 112 (asparagine 112) interacts with anthranilate. Arginine 167 is a binding site for anthranilate. Residues aspartate 226 and glutamate 227 each coordinate Mg(2+).

This sequence belongs to the anthranilate phosphoribosyltransferase family. In terms of assembly, homodimer. The cofactor is Mg(2+).

It catalyses the reaction N-(5-phospho-beta-D-ribosyl)anthranilate + diphosphate = 5-phospho-alpha-D-ribose 1-diphosphate + anthranilate. Its pathway is amino-acid biosynthesis; L-tryptophan biosynthesis; L-tryptophan from chorismate: step 2/5. Its function is as follows. Catalyzes the transfer of the phosphoribosyl group of 5-phosphorylribose-1-pyrophosphate (PRPP) to anthranilate to yield N-(5'-phosphoribosyl)-anthranilate (PRA). This is Anthranilate phosphoribosyltransferase from Azotobacter vinelandii (strain DJ / ATCC BAA-1303).